A 969-amino-acid polypeptide reads, in one-letter code: Endogenous retrovirus group K member 11 Pol protein (969 aa).

Residues 57–245 (LEKGHIEPSF…TPFHYLGMQI (189 aa)) enclose the Reverse transcriptase domain. The LPQG signature appears at 161-164 (LPQG). An RNase H type-1 domain is found at 460 to 590 (LENALTVFTD…ADLLVSSALI (131 aa)). Residues aspartate 469, glutamate 497, aspartate 517, and aspartate 582 each coordinate Mg(2+). An Integrase-type zinc finger spans residues 587-628 (SALIKAQELHALTHVNAAGLKNKFDVTWKQAKDIVQHCTQCQ). The Zn(2+) site is built by histidine 596, histidine 600, cysteine 624, and cysteine 627. Residues 642-803 (RGLCPNALWQ…TSAEQHLTGK (162 aa)) form the Integrase catalytic domain. Residues 811-859 (KLIWWKDNKNKTWEIGKVITWGRGFACVSPGENQLPVWIPTRHLKFYNE) constitute a DNA-binding region (integrase-type).

This sequence belongs to the beta type-B retroviral polymerase family. HERV class-II K(HML-2) pol subfamily.

It catalyses the reaction DNA(n) + a 2'-deoxyribonucleoside 5'-triphosphate = DNA(n+1) + diphosphate. The enzyme catalyses Endonucleolytic cleavage to 5'-phosphomonoester.. Functionally, early post-infection, the reverse transcriptase converts the viral RNA genome into double-stranded viral DNA. The RNase H domain of the reverse transcriptase performs two functions. It degrades the RNA template and specifically removes the RNA primer from the RNA/DNA hybrid. Following nuclear import, the integrase catalyzes the insertion of the linear, double-stranded viral DNA into the host cell chromosome. Endogenous Pol proteins may have kept, lost or modified their original function during evolution. This Homo sapiens (Human) protein is Endogenous retrovirus group K member 11 Pol protein (ERVK-11).